Reading from the N-terminus, the 318-residue chain is Protoheme IX farnesyltransferase (318 aa).

9 helical membrane-spanning segments follow: residues 29–49 (IIPL…QGQV), 51–71 (PVLL…AQTI), 102–122 (LIFA…FANL), 123–143 (LAAS…THWL), 151–171 (IVIG…AVTG), 179–199 (LIFA…ALMI), 219–239 (ATVK…LLLV), 241–261 (PLHS…AVFI), and 280–300 (LFLY…IDSL).

Belongs to the UbiA prenyltransferase family. Protoheme IX farnesyltransferase subfamily.

It is found in the cell inner membrane. The enzyme catalyses heme b + (2E,6E)-farnesyl diphosphate + H2O = Fe(II)-heme o + diphosphate. Its pathway is porphyrin-containing compound metabolism; heme O biosynthesis; heme O from protoheme: step 1/1. Its function is as follows. Converts heme B (protoheme IX) to heme O by substitution of the vinyl group on carbon 2 of heme B porphyrin ring with a hydroxyethyl farnesyl side group. The sequence is that of Protoheme IX farnesyltransferase from Trichormus variabilis (strain ATCC 29413 / PCC 7937) (Anabaena variabilis).